A 590-amino-acid chain; its full sequence is Muscarinic acetylcholine receptor M3 (590 aa).

Residues 1 to 67 lie on the Extracellular side of the membrane; the sequence is MTLHNNSTTS…DPLGGHTVWQ (67 aa). 5 N-linked (GlcNAc...) asparagine glycosylation sites follow: Asn-5, Asn-6, Asn-15, Asn-41, and Asn-48. The chain crosses the membrane as a helical span at residues 68-91; sequence VVFIAFLTGILALVTIIGNILVIV. The Cytoplasmic portion of the chain corresponds to 92-104; sequence SFKVNKQLKTVNN. The helical transmembrane segment at 105 to 130 threads the bilayer; sequence YFLLSLACADLIIGVISMNLFTTYII. The Extracellular segment spans residues 131–142; that stretch reads MNRWALGNLACD. The cysteines at positions 141 and 221 are disulfide-linked. Residues 143-164 form a helical membrane-spanning segment; the sequence is LWLAIDYVASNASVMNLLVISF. Over 165 to 184 the chain is Cytoplasmic; that stretch reads DRYFSITRPLTYRAKRTTKR. A helical membrane pass occupies residues 185–206; the sequence is AGVMIGLAWVISFVLWAPAILF. The Extracellular portion of the chain corresponds to 207 to 229; it reads WQYFVGKRTVPPGECFIQFLSEP. A helical membrane pass occupies residues 230–252; the sequence is TITFGTAIAAFYMPVTIMTILYW. Residues 253–491 lie on the Cytoplasmic side of the membrane; it reads RIYKETEKRT…SLVKEKKAAQ (239 aa). The Basolateral sorting signal signature appears at 275-281; sequence AETENFV. A disordered region spans residues 323-357; it reads SSEQMDQDHSSSDSWNNNDAAASLENSASSDEEDI. Low complexity predominate over residues 334 to 345; sequence SDSWNNNDAAAS. Residue Ser-385 is modified to Phosphoserine. The chain crosses the membrane as a helical span at residues 492 to 514; the sequence is TLSAILLAFIITWTPYNIMVLVN. Residues 515–526 are Extracellular-facing; it reads TFCDSCIPKTFW. Cys-517 and Cys-520 are joined by a disulfide. A helical membrane pass occupies residues 527–546; the sequence is NLGYWLCYINSTVNPVCYAL. The Cytoplasmic portion of the chain corresponds to 547-590; sequence CNKTFRTTFKMLLLCQCGKKKRRKQQYQQRQSVIFHKRAPEQAL.

Belongs to the G-protein coupled receptor 1 family. Muscarinic acetylcholine receptor subfamily. CHRM3 sub-subfamily. In terms of assembly, homodimer; the dimers can form tetramers. Interacts with NALCN. Interacts with TMEM147.

The protein resides in the cell membrane. It is found in the postsynaptic cell membrane. It localises to the basolateral cell membrane. The protein localises to the endoplasmic reticulum membrane. Functionally, the muscarinic acetylcholine receptor mediates various cellular responses, including inhibition of adenylate cyclase, breakdown of phosphoinositides and modulation of potassium channels through the action of G proteins. Primary transducing effect is Pi turnover. The polypeptide is Muscarinic acetylcholine receptor M3 (CHRM3) (Gorilla gorilla gorilla (Western lowland gorilla)).